We begin with the raw amino-acid sequence, 397 residues long: MSESVHTNTSLWSKGMKAVIVAQFLSAFGDNALLFATLALLKAQFYPEWSQPILQMVFVGAYILFAPFVGQVADSFAKGRVMMFANGLKLLGAASICFGINPFLGYTLVGVGAAAYSPAKYGILGELTTGSKLVKANGLMEASTIAAILLGSVAGGVLADWHVLVALAACALAYGGAVVANIYIPKLAAARPGQSWNLINMTRSFLNACTSLWCNGETRFSLVGTSLFWGAGVTLRFLLVLWVPVALGITDNATPTYLNAMVAIGIVVGAGAAAKLVTLETVSRCMPAGILIGVVVLIFSLQHELLPAYALLMLIGVLGGFFVVPLNALLQERGKKSVGAGNAIAVQNLGENSAMLLMLGIYSLAVMVGIPVVPIGIGFGALFALAITALWIWQRRH.

Topologically, residues 1–17 (MSESVHTNTSLWSKGMK) are periplasmic. The helical transmembrane segment at 18 to 38 (AVIVAQFLSAFGDNALLFATL) threads the bilayer. At 39–52 (ALLKAQFYPEWSQP) the chain is on the cytoplasmic side. A helical membrane pass occupies residues 53–73 (ILQMVFVGAYILFAPFVGQVA). Over 74–90 (DSFAKGRVMMFANGLKL) the chain is Periplasmic. A helical transmembrane segment spans residues 91–111 (LGAASICFGINPFLGYTLVGV). The Cytoplasmic segment spans residues 112-144 (GAAAYSPAKYGILGELTTGSKLVKANGLMEAST). A helical membrane pass occupies residues 145–165 (IAAILLGSVAGGVLADWHVLV). A topological domain (periplasmic) is located at residue alanine 166. A helical transmembrane segment spans residues 167-187 (LAACALAYGGAVVANIYIPKL). At 188–226 (AAARPGQSWNLINMTRSFLNACTSLWCNGETRFSLVGTS) the chain is on the cytoplasmic side. A helical membrane pass occupies residues 227 to 247 (LFWGAGVTLRFLLVLWVPVAL). Residues 248-256 (GITDNATPT) lie on the Periplasmic side of the membrane. Residues 257-277 (YLNAMVAIGIVVGAGAAAKLV) form a helical membrane-spanning segment. The Cytoplasmic segment spans residues 278–280 (TLE). Residues 281–301 (TVSRCMPAGILIGVVVLIFSL) traverse the membrane as a helical segment. At 302–304 (QHE) the chain is on the periplasmic side. A helical transmembrane segment spans residues 305–325 (LLPAYALLMLIGVLGGFFVVP). The Cytoplasmic segment spans residues 326-343 (LNALLQERGKKSVGAGNA). A helical transmembrane segment spans residues 344 to 364 (IAVQNLGENSAMLLMLGIYSL). Residues 365–366 (AV) are Periplasmic-facing. The helical transmembrane segment at 367-387 (MVGIPVVPIGIGFGALFALAI) threads the bilayer. The Cytoplasmic portion of the chain corresponds to 388–397 (TALWIWQRRH).

It belongs to the major facilitator superfamily. LplT (TC 2.A.1.42) family.

Its subcellular location is the cell inner membrane. Catalyzes the facilitated diffusion of 2-acyl-glycero-3-phosphoethanolamine (2-acyl-GPE) into the cell. The chain is Lysophospholipid transporter LplT from Shigella dysenteriae serotype 1 (strain Sd197).